A 338-amino-acid polypeptide reads, in one-letter code: Ketol-acid reductoisomerase (NADP(+)) (338 aa).

The 181-residue stretch at 1-181 (MKVFYDKDAD…GGGRAGIIET (181 aa)) folds into the KARI N-terminal Rossmann domain. NADP(+) contacts are provided by residues 24–27 (YGSQ), arginine 47, and serine 52. The active site involves histidine 107. Glycine 133 lines the NADP(+) pocket. The KARI C-terminal knotted domain maps to 182–327 (NFREETETDL…EKLRAMMPWI (146 aa)). Residues aspartate 190, glutamate 194, glutamate 226, and glutamate 230 each coordinate Mg(2+). Serine 251 contributes to the substrate binding site.

Belongs to the ketol-acid reductoisomerase family. Requires Mg(2+) as cofactor.

The enzyme catalyses (2R)-2,3-dihydroxy-3-methylbutanoate + NADP(+) = (2S)-2-acetolactate + NADPH + H(+). The catalysed reaction is (2R,3R)-2,3-dihydroxy-3-methylpentanoate + NADP(+) = (S)-2-ethyl-2-hydroxy-3-oxobutanoate + NADPH + H(+). It functions in the pathway amino-acid biosynthesis; L-isoleucine biosynthesis; L-isoleucine from 2-oxobutanoate: step 2/4. The protein operates within amino-acid biosynthesis; L-valine biosynthesis; L-valine from pyruvate: step 2/4. Its function is as follows. Involved in the biosynthesis of branched-chain amino acids (BCAA). Catalyzes an alkyl-migration followed by a ketol-acid reduction of (S)-2-acetolactate (S2AL) to yield (R)-2,3-dihydroxy-isovalerate. In the isomerase reaction, S2AL is rearranged via a Mg-dependent methyl migration to produce 3-hydroxy-3-methyl-2-ketobutyrate (HMKB). In the reductase reaction, this 2-ketoacid undergoes a metal-dependent reduction by NADPH to yield (R)-2,3-dihydroxy-isovalerate. In Cupriavidus pinatubonensis (strain JMP 134 / LMG 1197) (Cupriavidus necator (strain JMP 134)), this protein is Ketol-acid reductoisomerase (NADP(+)).